A 205-amino-acid polypeptide reads, in one-letter code: Heat shock protein beta-11 (205 aa).

In terms of domain architecture, sHSP spans 67–180 (VSPMTTFKPI…NERVIPITYT (114 aa)). The interval 184 to 205 (KNPALQNSEPENQAVEAEAAEN) is disordered. Over residues 192-205 (EPENQAVEAEAAEN) the composition is skewed to low complexity.

This sequence belongs to the small heat shock protein (HSP20) family. Expressed specifically in the rostral-most somites at 24 hpf. At 48 hpf, expression continues in the rostral-most somites and also in the notochord. Somite expression was restricted to the vicinity of the horizontal myoseptum. In adults, expressed in the heart.

The chain is Heat shock protein beta-11 (hspb11) from Danio rerio (Zebrafish).